The following is a 299-amino-acid chain: Bifunctional protein FolD (299 aa).

Residues 166 to 168, serine 191, and isoleucine 232 contribute to the NADP(+) site; that span reads GRS.

Belongs to the tetrahydrofolate dehydrogenase/cyclohydrolase family. In terms of assembly, homodimer.

The catalysed reaction is (6R)-5,10-methylene-5,6,7,8-tetrahydrofolate + NADP(+) = (6R)-5,10-methenyltetrahydrofolate + NADPH. The enzyme catalyses (6R)-5,10-methenyltetrahydrofolate + H2O = (6R)-10-formyltetrahydrofolate + H(+). It participates in one-carbon metabolism; tetrahydrofolate interconversion. Its function is as follows. Catalyzes the oxidation of 5,10-methylenetetrahydrofolate to 5,10-methenyltetrahydrofolate and then the hydrolysis of 5,10-methenyltetrahydrofolate to 10-formyltetrahydrofolate. This is Bifunctional protein FolD from Dinoroseobacter shibae (strain DSM 16493 / NCIMB 14021 / DFL 12).